Consider the following 513-residue polypeptide: Serine/threonine-protein kinase PBL27 (513 aa).

Residues 1–61 form a disordered region; sequence MSGCLPCFGS…KKELTAPKEG (61 aa). S-palmitoyl cysteine attachment occurs at residues C4 and C7. Composition is skewed to basic and acidic residues over residues 15 to 27 and 38 to 57; these read AASK…ELSA and ISLD…ELTA. The 278-residue stretch at 83–360 folds into the Protein kinase domain; the sequence is FRPECLLGEG…GDVVTALTYL (278 aa). ATP is bound by residues 89–97 and K112; that span reads LGEGGFGRV. D210 serves as the catalytic Proton acceptor. Residue S244 is modified to Phosphoserine; by CERK1. T245 and T250 each carry phosphothreonine; by CERK1. Residues 365-378 show a composition bias toward polar residues; the sequence is FDPNAPSGQNSRSG. The disordered stretch occupies residues 365 to 513; sequence FDPNAPSGQN…GPGSFDSTND (149 aa). Residues S392 and S401 each carry the phosphoserine modification. The segment covering 417–428 has biased composition (basic and acidic residues); it reads NSPDYRRRDMVR. Gly residues predominate over residues 434–446; sequence SEGGSETGGGSGR. Over residues 456-473 the composition is skewed to polar residues; it reads QESQRGSPASVGRSSRGT. A compositionally biased stretch (basic and acidic residues) spans 475–486; it reads RNRDLDRERAVA. The segment covering 504–513 has biased composition (polar residues); that stretch reads GPGSFDSTND.

This sequence belongs to the protein kinase superfamily. Ser/Thr protein kinase family. Interacts with CERK1 (preferentially unphosphorylated) at the plasma membrane. Binds to MAPKKK5 at the plasma membrane; disassociation is induced by chitin perception by the CERK1 complex. Also associates with MAPKKK3. Post-translationally, phosphorylated by CERK1 upon elicitation by chitin. In terms of processing, palmitoylation at Cys-4 and Cys-7 are required for plasma membrane location.

It is found in the cell membrane. It catalyses the reaction L-seryl-[protein] + ATP = O-phospho-L-seryl-[protein] + ADP + H(+). The catalysed reaction is L-threonyl-[protein] + ATP = O-phospho-L-threonyl-[protein] + ADP + H(+). Its function is as follows. Receptor-like cytoplasmic kinase involved in the transduction of signal between the host cell surface chitin receptor complex CERK1-LYK5 and the intracellular MAPKKK5-dependent mitogen-activated protein kinase (MAPK) cascade that leads to chitin-induced immunity. Phosphorylates and activates MAPKKK5 when phosphorylated by CERK1 after elicitation by chitin. This is Serine/threonine-protein kinase PBL27 from Arabidopsis thaliana (Mouse-ear cress).